Here is a 243-residue protein sequence, read N- to C-terminus: 3-deoxy-manno-octulosonate cytidylyltransferase (243 aa).

The protein belongs to the KdsB family.

It is found in the cytoplasm. It carries out the reaction 3-deoxy-alpha-D-manno-oct-2-ulosonate + CTP = CMP-3-deoxy-beta-D-manno-octulosonate + diphosphate. The protein operates within nucleotide-sugar biosynthesis; CMP-3-deoxy-D-manno-octulosonate biosynthesis; CMP-3-deoxy-D-manno-octulosonate from 3-deoxy-D-manno-octulosonate and CTP: step 1/1. Functionally, activates KDO (a required 8-carbon sugar) for incorporation into bacterial lipopolysaccharide in Gram-negative bacteria. This Wigglesworthia glossinidia brevipalpis protein is 3-deoxy-manno-octulosonate cytidylyltransferase.